The chain runs to 313 residues: Porphobilinogen deaminase (313 aa).

Cys-242 is modified (S-(dipyrrolylmethanemethyl)cysteine).

This sequence belongs to the HMBS family. Monomer. It depends on dipyrromethane as a cofactor.

The catalysed reaction is 4 porphobilinogen + H2O = hydroxymethylbilane + 4 NH4(+). It participates in porphyrin-containing compound metabolism; protoporphyrin-IX biosynthesis; coproporphyrinogen-III from 5-aminolevulinate: step 2/4. Functionally, tetrapolymerization of the monopyrrole PBG into the hydroxymethylbilane pre-uroporphyrinogen in several discrete steps. In Pseudomonas syringae pv. syringae (strain B728a), this protein is Porphobilinogen deaminase.